Reading from the N-terminus, the 408-residue chain is CinA-like protein (408 aa).

The protein belongs to the CinA family.

This Fervidobacterium nodosum (strain ATCC 35602 / DSM 5306 / Rt17-B1) protein is CinA-like protein.